We begin with the raw amino-acid sequence, 329 residues long: MAGRRSSNVFPLSGNSGGGLEVDTPTWLSSQAATSRLMVRPSMGPGICPGPEVWGVPLGSSPYEFRGGIAPYRACEARAWSQSSSEDTCPGPYIALRYMPNLALPEDVSAIQKEMEQLAKELRQKRMTLGYSQADVGFAVGAMFGKVLSQTTICRFEAQQLSLANMWKLRPLLKMWLEEVDEKNLLGICRMEMILEQARKRRRASRERRIGSNLEKLFLQCPEPTPQQISYIAGRLRLQKDLVQVWFSNRSQMGSWPTNDTSRREDVGATGSPFPGPPVCFPMAPGLHFDFTHYEGSCLTPLYSSTPFPVRGALLSAPTTTLGLPRLSS.

Positions 1 to 14 (MAGRRSSNVFPLSG) are enriched in polar residues. Positions 1–24 (MAGRRSSNVFPLSGNSGGGLEVDT) are disordered. The 75-residue stretch at 107–181 (DVSAIQKEME…LLKMWLEEVD (75 aa)) folds into the POU-specific domain. Positions 199–258 (RKRRRASRERRIGSNLEKLFLQCPEPTPQQISYIAGRLRLQKDLVQVWFSNRSQMGSWPT) form a DNA-binding region, homeobox.

This sequence belongs to the POU transcription factor family. Class-5 subfamily. In adult brain, expressed in the olfactory bulb, becoming specifically concentrated in the mitral cell layer. Also found in the pyramidal cell layer of the hippocampus, in the granule cell layer of the cerebellum and in the cortex.

Its subcellular location is the nucleus. Its function is as follows. Transcription factor that binds preferentially to the octamer motif (5'-ATGTTAAT-3'). May exert a regulatory function in meiotic events that are required for terminal differentiation of male germ cell. The polypeptide is POU domain, class 5, transcription factor 2 (Pou5f2) (Mus musculus (Mouse)).